The following is a 222-amino-acid chain: Uracil-DNA glycosylase (222 aa).

Catalysis depends on aspartate 66, which acts as the Proton acceptor.

This sequence belongs to the uracil-DNA glycosylase (UDG) superfamily. UNG family.

Its subcellular location is the cytoplasm. The catalysed reaction is Hydrolyzes single-stranded DNA or mismatched double-stranded DNA and polynucleotides, releasing free uracil.. Its function is as follows. Excises uracil residues from the DNA which can arise as a result of misincorporation of dUMP residues by DNA polymerase or due to deamination of cytosine. In Porphyromonas gingivalis (strain ATCC BAA-308 / W83), this protein is Uracil-DNA glycosylase.